The following is a 357-amino-acid chain: Palmitoyltransferase ZDHHC20-A (357 aa).

Over 1 to 14 (MAPSHAVRCCQRGL) the chain is Cytoplasmic. A helical transmembrane segment spans residues 15–35 (SWIPVIFINLVVCWSYYAYVV). The Lumenal segment spans residues 36–50 (ELCIYTIPNVNEQVI). A helical transmembrane segment spans residues 51–71 (YLVVFHAFFFMFMWSYWKTIS). Residues 72–166 (SKPTNPSKEF…NNCVGFSNYK (95 aa)) lie on the Cytoplasmic side of the membrane. One can recognise a DHHC domain in the interval 123–173 (RYCDRCQLIKPDRCHHCSTCDKCVLKMDHHCPWVNNCVGFSNYKFFVLFLA). The S-palmitoyl cysteine intermediate role is filled by cysteine 153. A helical transmembrane segment spans residues 167–187 (FFVLFLAYSMLYCVYIAATVL). The Lumenal portion of the chain corresponds to 188–204 (QYFIKFWTNQLPDTHAK). Residues 205-228 (FHVLFLFFVAAMFFISILSLFSYH) form a helical membrane-spanning segment. The Cytoplasmic portion of the chain corresponds to 229–357 (LWLVGKNRTT…PVCVTLENES (129 aa)).

This sequence belongs to the DHHC palmitoyltransferase family.

It localises to the golgi apparatus membrane. It is found in the cell membrane. The protein localises to the cytoplasm. Its subcellular location is the perinuclear region. The protein resides in the endoplasmic reticulum membrane. It localises to the endoplasmic reticulum-Golgi intermediate compartment membrane. The enzyme catalyses L-cysteinyl-[protein] + hexadecanoyl-CoA = S-hexadecanoyl-L-cysteinyl-[protein] + CoA. It carries out the reaction L-cysteinyl-[protein] + tetradecanoyl-CoA = S-tetradecanoyl-L-cysteinyl-[protein] + CoA. The catalysed reaction is L-cysteinyl-[protein] + octadecanoyl-CoA = S-octadecanoyl-L-cysteinyl-[protein] + CoA. Palmitoyltransferase that could catalyze the addition of palmitate onto various protein substrates. Catalyzes palmitoylation of Cys residues on protein substrates and has a preference for acyl-CoA with C16 fatty acid chains but may also utilize acyl-CoA with C14 and C18 fatty acid chains. This chain is Palmitoyltransferase ZDHHC20-A, found in Danio rerio (Zebrafish).